The primary structure comprises 410 residues: Peptidase T (410 aa).

H79 is a binding site for Zn(2+). The active site involves D81. D142 is a binding site for Zn(2+). Residue E176 is the Proton acceptor of the active site. Zn(2+) contacts are provided by E177, D199, and H381.

Belongs to the peptidase M20B family. It depends on Zn(2+) as a cofactor.

It is found in the cytoplasm. The catalysed reaction is Release of the N-terminal residue from a tripeptide.. In terms of biological role, cleaves the N-terminal amino acid of tripeptides. The chain is Peptidase T from Bacillus thuringiensis subsp. konkukian (strain 97-27).